A 185-amino-acid polypeptide reads, in one-letter code: 3-hexulose-6-phosphate isomerase (185 aa).

The region spanning 29 to 172 (LADHILSSHQ…ILKLMEKKGL (144 aa)) is the SIS domain. Substrate contacts are provided by residues serine 47 and 86 to 91 (SGSGET). Residue glutamate 152 is the Proton acceptor of the active site.

Belongs to the SIS family. PHI subfamily. As to quaternary structure, homotetramer.

It carries out the reaction D-arabino-hex-3-ulose 6-phosphate = beta-D-fructose 6-phosphate. The protein operates within one-carbon metabolism; formaldehyde assimilation via RuMP pathway; D-fructose 6-phosphate from D-ribulose 5-phosphate and formaldehyde: step 2/2. Its function is as follows. Catalyzes the isomerization between 3-hexulose 6-phosphate and fructose 6-phosphate. Together with HxlA, may act as a formaldehyde detoxification system. This chain is 3-hexulose-6-phosphate isomerase (hxlB), found in Bacillus subtilis (strain 168).